We begin with the raw amino-acid sequence, 642 residues long: Threonine--tRNA ligase (642 aa).

Residues 1–61 (MPVITLPDGS…VDDASVAIIT (61 aa)) enclose the TGS domain. Residues 243–534 (DHRKIGKQLD…LTEEYAGFFP (292 aa)) form a catalytic region. Residues Cys334, His385, and His511 each coordinate Zn(2+).

It belongs to the class-II aminoacyl-tRNA synthetase family. As to quaternary structure, homodimer. It depends on Zn(2+) as a cofactor.

It localises to the cytoplasm. The enzyme catalyses tRNA(Thr) + L-threonine + ATP = L-threonyl-tRNA(Thr) + AMP + diphosphate + H(+). Functionally, catalyzes the attachment of threonine to tRNA(Thr) in a two-step reaction: L-threonine is first activated by ATP to form Thr-AMP and then transferred to the acceptor end of tRNA(Thr). Also edits incorrectly charged L-seryl-tRNA(Thr). The polypeptide is Threonine--tRNA ligase (Erwinia tasmaniensis (strain DSM 17950 / CFBP 7177 / CIP 109463 / NCPPB 4357 / Et1/99)).